A 330-amino-acid polypeptide reads, in one-letter code: Succinoglycan biosynthesis protein ExoA (330 aa).

3 helical membrane passes run 116-136 (ALAT…FSTF), 260-280 (IAFG…VGVW), and 299-319 (YGPL…AGFW).

This sequence belongs to the glycosyltransferase 2 family.

The protein resides in the cell membrane. Its pathway is glycan metabolism; exopolysaccharide biosynthesis. In terms of biological role, glycosyltransferase required for the synthesis of succinoglycan (EPS I). Needed for the addition of the second sugar (glucose). Catalyzes the formation of a beta-1,3 linkage with the galactose lipid carrier. This chain is Succinoglycan biosynthesis protein ExoA (exoA), found in Rhizobium meliloti (strain 1021) (Ensifer meliloti).